The following is a 257-amino-acid chain: Phosphomannomutase (257 aa).

Asp19 (nucleophile) is an active-site residue. Residues Asp19 and Asp21 each contribute to the Mg(2+) site. Catalysis depends on Asp21, which acts as the Proton donor/acceptor. 6 residues coordinate alpha-D-mannose 1-phosphate: Arg28, Arg133, Arg144, Arg151, Ser189, and Asp191. Asp219, Phe231, Asp233, and Thr236 together coordinate Mg(2+).

It belongs to the eukaryotic PMM family. As to quaternary structure, homodimer.

It localises to the cytoplasm. It carries out the reaction alpha-D-mannose 1-phosphate = D-mannose 6-phosphate. It participates in nucleotide-sugar biosynthesis; GDP-alpha-D-mannose biosynthesis; alpha-D-mannose 1-phosphate from D-fructose 6-phosphate: step 2/2. Functionally, involved in the synthesis of the GDP-mannose and dolichol-phosphate-mannose required for a number of critical mannosyl transfer reactions. The sequence is that of Phosphomannomutase (pmm1) from Schizosaccharomyces pombe (strain 972 / ATCC 24843) (Fission yeast).